The sequence spans 308 residues: N-acetylmuramic acid 6-phosphate etherase (308 aa).

Residues 62 to 225 form the SIS domain; that stretch reads TAARLRQGGR…STGVMVQLGK (164 aa). The active-site Proton donor is the Glu-90. The active site involves Glu-121.

The protein belongs to the GCKR-like family. MurNAc-6-P etherase subfamily. As to quaternary structure, homodimer.

The enzyme catalyses N-acetyl-D-muramate 6-phosphate + H2O = N-acetyl-D-glucosamine 6-phosphate + (R)-lactate. It functions in the pathway amino-sugar metabolism; N-acetylmuramate degradation. Its function is as follows. Specifically catalyzes the cleavage of the D-lactyl ether substituent of MurNAc 6-phosphate, producing GlcNAc 6-phosphate and D-lactate. In Thermosynechococcus vestitus (strain NIES-2133 / IAM M-273 / BP-1), this protein is N-acetylmuramic acid 6-phosphate etherase.